Reading from the N-terminus, the 327-residue chain is Annexin A8 (327 aa).

Annexin repeat units lie at residues 21 to 92 (FNPD…ALMY), 93 to 164 (PPYR…CLLQ), 177 to 249 (GLAL…TVVK), and 253 to 324 (NVHS…NLVG). Ca(2+)-binding residues include Met266, Gly268, Gly270, and Asp310.

The protein belongs to the annexin family.

Its function is as follows. This protein is an anticoagulant protein that acts as an indirect inhibitor of the thromboplastin-specific complex, which is involved in the blood coagulation cascade. The sequence is that of Annexin A8 (Anxa8) from Rattus norvegicus (Rat).